Here is a 316-residue protein sequence, read N- to C-terminus: Ribosomal RNA small subunit methyltransferase H (316 aa).

Residues 35–37 (GGH), Asp-55, Phe-79, Asp-101, and Gln-108 contribute to the S-adenosyl-L-methionine site.

It belongs to the methyltransferase superfamily. RsmH family.

It is found in the cytoplasm. It catalyses the reaction cytidine(1402) in 16S rRNA + S-adenosyl-L-methionine = N(4)-methylcytidine(1402) in 16S rRNA + S-adenosyl-L-homocysteine + H(+). In terms of biological role, specifically methylates the N4 position of cytidine in position 1402 (C1402) of 16S rRNA. The sequence is that of Ribosomal RNA small subunit methyltransferase H from Aliivibrio fischeri (strain MJ11) (Vibrio fischeri).